Consider the following 657-residue polypeptide: Wall-associated receptor kinase-like 20 (657 aa).

The signal sequence occupies residues 1–23 (MEKKRSYYALLIPTLLTVWLACA). Over 24–293 (GHSCARHAKA…KHCKKKKKTV (270 aa)) the chain is Extracellular. Asn140 carries an N-linked (GlcNAc...) asparagine glycan. A helical membrane pass occupies residues 294-314 (VFAGAAVAVVGVTLAIAVAVI). Over 315 to 657 (GTKHSHQKVK…NILSQEVTET (343 aa)) the chain is Cytoplasmic. Positions 363–646 (FSKDNLIGTG…KEVADEIEYI (284 aa)) constitute a Protein kinase domain. ATP-binding positions include 369–377 (IGTGGFGEV) and Lys391. Asp490 serves as the catalytic Proton acceptor.

It belongs to the protein kinase superfamily. Ser/Thr protein kinase family.

The protein resides in the membrane. The enzyme catalyses L-seryl-[protein] + ATP = O-phospho-L-seryl-[protein] + ADP + H(+). The catalysed reaction is L-threonyl-[protein] + ATP = O-phospho-L-threonyl-[protein] + ADP + H(+). Its function is as follows. Serine/threonine-protein kinase that may function as a signaling receptor of extracellular matrix component. The protein is Wall-associated receptor kinase-like 20 (WAKL20) of Arabidopsis thaliana (Mouse-ear cress).